Reading from the N-terminus, the 188-residue chain is Peptidyl-tRNA hydrolase (188 aa).

A tRNA-binding site is contributed by Tyr-14. The Proton acceptor role is filled by His-19. TRNA-binding residues include Tyr-64, Asn-66, and Asn-113.

This sequence belongs to the PTH family. As to quaternary structure, monomer.

The protein localises to the cytoplasm. The catalysed reaction is an N-acyl-L-alpha-aminoacyl-tRNA + H2O = an N-acyl-L-amino acid + a tRNA + H(+). Functionally, hydrolyzes ribosome-free peptidyl-tRNAs (with 1 or more amino acids incorporated), which drop off the ribosome during protein synthesis, or as a result of ribosome stalling. In terms of biological role, catalyzes the release of premature peptidyl moieties from peptidyl-tRNA molecules trapped in stalled 50S ribosomal subunits, and thus maintains levels of free tRNAs and 50S ribosomes. The polypeptide is Peptidyl-tRNA hydrolase (Chloroflexus aggregans (strain MD-66 / DSM 9485)).